The chain runs to 748 residues: Catalase-peroxidase (748 aa).

The segment at residues W91–Y236 is a cross-link (tryptophyl-tyrosyl-methioninium (Trp-Tyr) (with M-262)). H92 serves as the catalytic Proton acceptor. The tract at residues A201–L223 is disordered. Residues K207–R221 are compositionally biased toward basic and acidic residues. The tryptophyl-tyrosyl-methioninium (Tyr-Met) (with W-91) cross-link spans Y236 to M262. Residue H277 participates in heme b binding.

The protein belongs to the peroxidase family. Peroxidase/catalase subfamily. Homodimer or homotetramer. Heme b serves as cofactor. Post-translationally, formation of the three residue Trp-Tyr-Met cross-link is important for the catalase, but not the peroxidase activity of the enzyme.

The catalysed reaction is H2O2 + AH2 = A + 2 H2O. The enzyme catalyses 2 H2O2 = O2 + 2 H2O. Its function is as follows. Bifunctional enzyme with both catalase and broad-spectrum peroxidase activity. The chain is Catalase-peroxidase from Bordetella avium (strain 197N).